The primary structure comprises 151 residues: UPF0208 membrane protein YE1335 (151 aa).

A run of 2 helical transmembrane segments spans residues 46 to 66 (FGIR…IALG) and 69 to 89 (LGPA…GLWW).

This sequence belongs to the UPF0208 family.

It is found in the cell inner membrane. The chain is UPF0208 membrane protein YE1335 from Yersinia enterocolitica serotype O:8 / biotype 1B (strain NCTC 13174 / 8081).